A 286-amino-acid polypeptide reads, in one-letter code: MIIDRLFDSVEKKGHVCLGLDTDITYVPEEFCKKFNSIEDAIFNFNKKIIDATLDVVSCYKVQIAYYEAYGLKGLLAYKRTLEYLREKKAIAIADIKRGDIAKTAEMYAKAHFEGDFEADFVTLNPYMGLDGIEPYMPYIEKMEKGLFILLRTSNKGAYDIQYIKTQGGKNVYDEVGEKIYDLGQKATGRSKYSSIGAVVGCTHVEEGVEIRNKFKNMFFLIPGYGAQGGTAKEVSLYLREGNGGVVNSSRGILLAYKKEENGEKIFDECARLAAINMRDEIRKTL.

Lys97 functions as the Proton donor in the catalytic mechanism.

The protein belongs to the OMP decarboxylase family. Type 2 subfamily.

It catalyses the reaction orotidine 5'-phosphate + H(+) = UMP + CO2. The protein operates within pyrimidine metabolism; UMP biosynthesis via de novo pathway; UMP from orotate: step 2/2. The sequence is that of Orotidine 5'-phosphate decarboxylase (pyrF) from Clostridium acetobutylicum (strain ATCC 824 / DSM 792 / JCM 1419 / IAM 19013 / LMG 5710 / NBRC 13948 / NRRL B-527 / VKM B-1787 / 2291 / W).